A 193-amino-acid polypeptide reads, in one-letter code: Peptidyl-tRNA hydrolase (193 aa).

TRNA is bound at residue Tyr-16. The active-site Proton acceptor is His-21. The tRNA site is built by Phe-66, Asn-68, and Asn-114.

Belongs to the PTH family. In terms of assembly, monomer.

It localises to the cytoplasm. It carries out the reaction an N-acyl-L-alpha-aminoacyl-tRNA + H2O = an N-acyl-L-amino acid + a tRNA + H(+). Hydrolyzes ribosome-free peptidyl-tRNAs (with 1 or more amino acids incorporated), which drop off the ribosome during protein synthesis, or as a result of ribosome stalling. In terms of biological role, catalyzes the release of premature peptidyl moieties from peptidyl-tRNA molecules trapped in stalled 50S ribosomal subunits, and thus maintains levels of free tRNAs and 50S ribosomes. This is Peptidyl-tRNA hydrolase from Pelobacter propionicus (strain DSM 2379 / NBRC 103807 / OttBd1).